Here is a 324-residue protein sequence, read N- to C-terminus: MLALGIEGTAHTLGIGIVSEKKVLANVFDTLTTEKGGIHPKEAAEHHARLMKPLLKKALEKAGISMDDIDVIAFSQGPGLGPALRVVATAARALAIRYNKPIVGVNHCIAHVEITKMFGIKDPVGLYVSGGNTQVLALEGGRYRVFGETLDIGIGNAIDVFARELGLGFPGGPKLEKLAEKGKNYIDLPYAVKGMDLSFSGLLTEAIRKYRSGKFRVEDLAYSFQETAFAALVEVTERALAHTEKKEVVLVGGVAANNRLREMLKIMAEDRGVKFFVPPYDLCRDNGAMIAYTGLRMYKAGISFPLEKTIVKQKFRTDEVEITW.

Positions 107, 111, and 127 each coordinate Fe cation. Substrate-binding positions include 127–131 (YVSGG), Asp-159, Gly-172, Glu-176, and Asn-257. Asp-285 serves as a coordination point for Fe cation.

The protein belongs to the KAE1 / TsaD family. As to quaternary structure, monomer. Component of the KEOPS complex that consists of Kae1, Bud32, Cgi121 and Pcc1; the whole complex dimerizes. Fe(2+) serves as cofactor.

It localises to the cytoplasm. The catalysed reaction is L-threonylcarbamoyladenylate + adenosine(37) in tRNA = N(6)-L-threonylcarbamoyladenosine(37) in tRNA + AMP + H(+). Its function is as follows. Required for the formation of a threonylcarbamoyl group on adenosine at position 37 (t(6)A37) in tRNAs that read codons beginning with adenine. Is a component of the KEOPS complex that is probably involved in the transfer of the threonylcarbamoyl moiety of threonylcarbamoyl-AMP (TC-AMP) to the N6 group of A37. Kae1 likely plays a direct catalytic role in this reaction, but requires other protein(s) of the complex to fulfill this activity. The sequence is that of tRNA N6-adenosine threonylcarbamoyltransferase from Pyrococcus horikoshii (strain ATCC 700860 / DSM 12428 / JCM 9974 / NBRC 100139 / OT-3).